We begin with the raw amino-acid sequence, 61 residues long: Metallothionein-1 (61 aa).

At Met1 the chain carries N-acetylmethionine. Residues 1 to 29 (MDPNCSCPTGGSCTCAGSCKCKACRCPSC) are beta. Residues Cys5, Cys7, Cys13, Cys15, Cys19, Cys21, Cys24, Cys26, Cys29, Cys33, Cys34, Cys36, Cys37, Cys41, Cys44, Cys48, Cys50, Cys57, Cys59, and Cys60 each coordinate a divalent metal cation. The segment at 30–61 (KKSCCSCCPVGCAKCAQGCVCKGASDKCSCCA) is alpha.

It belongs to the metallothionein superfamily. Type 1 family. In terms of assembly, monomer.

Metallothioneins have a high content of cysteine residues that bind various heavy metals; these proteins are transcriptionally regulated by both heavy metals and glucocorticoids. The polypeptide is Metallothionein-1 (MT1) (Bos taurus (Bovine)).